Reading from the N-terminus, the 502-residue chain is Sulfate adenylyltransferase (502 aa).

The N-terminal stretch occupies residues 1 to 167; sequence MPSPHGGVLQ…LEAIQLPVHY (167 aa). Residues 168–393 form a catalytic region; sequence DYPGWRKTPA…LRESNPSRPK (226 aa). Position 195 (Gln195) interacts with sulfate. ATP-binding positions include 195–198 and 289–292; these read QTRN and GRDH. Active-site residues include Thr196, Arg197, and Asn198. Sulfate is bound at residue Arg197. A sulfate-binding site is contributed by Ala293. Val331 provides a ligand contact to ATP. Positions 394–502 are required for oligomerization; adenylyl-sulfate kinase-like; it reads QGFALVLSET…FLEDQGFFQF (109 aa).

This sequence belongs to the sulfate adenylyltransferase family. Homohexamer. Dimer of trimers.

Its subcellular location is the cytoplasm. It catalyses the reaction sulfate + ATP + H(+) = adenosine 5'-phosphosulfate + diphosphate. Its pathway is sulfur metabolism; hydrogen sulfide biosynthesis; sulfite from sulfate: step 1/3. In terms of biological role, catalyzes the first intracellular reaction of sulfate assimilation, forming adenosine-5'-phosphosulfate (APS) from inorganic sulfate and ATP. Plays an important role in sulfate activation as a component of the biosynthesis pathway of sulfur-containing amino acids. The sequence is that of Sulfate adenylyltransferase from Kluyveromyces lactis (strain ATCC 8585 / CBS 2359 / DSM 70799 / NBRC 1267 / NRRL Y-1140 / WM37) (Yeast).